The sequence spans 1311 residues: Sterol regulatory element-binding protein cleavage-activating protein (1311 aa).

The Cytoplasmic portion of the chain corresponds to M1–H18. The helical transmembrane segment at G19 to A39 threads the bilayer. Residues S40 to E277 are Lumenal-facing. The segment at K46–E282 is loop-1. N-linked (GlcNAc...) asparagine glycans are attached at residues N242 and N261. A helical transmembrane segment spans residues I278–Y298. Positions E282–I440 constitute an SSD domain. Topologically, residues F299–K310 are cytoplasmic. A helical membrane pass occupies residues W311–L331. The Lumenal segment spans residues C332 to N342. A helical membrane pass occupies residues G343–T363. At K364–G399 the chain is on the cytoplasmic side. A helical membrane pass occupies residues I400–V420. V421 is a topological domain (lumenal). The helical transmembrane segment at G422–I442 threads the bilayer. The Cytoplasmic segment spans residues R443–R512. Residues M445–L450 carry the ER export signal motif. A helical transmembrane segment spans residues I513–L533. Residues D529–K726 form a loop-7 region. At R534–T723 the chain is on the lumenal side. N-linked (GlcNAc...) asparagine glycosylation is found at N583 and N651. Residues L724–L744 traverse the membrane as a helical segment. At L745–D1311 the chain is on the cytoplasmic side. Residues R747 to D1311 form an interaction with srebf region. 7 WD repeats span residues G790–I827, S997–S1034, D1037–Q1076, A1109–T1146, G1149–H1187, G1190–S1227, and Q1230–T1267.

Belongs to the WD repeat SCAP family. In terms of assembly, membrane region forms a homotetramer. Component of the SCAP-SREBP complex (composed of SCAP and srebf1/srebp1 or srebf2/srebp2). Forms a ternary complex with insig1 or insig2 through its transmembrane domains at high sterol concentrations. Interacts with the SEC23-SEC24 complex.

Its subcellular location is the endoplasmic reticulum membrane. The protein resides in the golgi apparatus membrane. It localises to the cytoplasmic vesicle. It is found in the COPII-coated vesicle membrane. Its function is as follows. Escort protein required for cholesterol as well as lipid homeostasis. Regulates export of the SCAP-SREBP complex from the endoplasmic reticulum to the Golgi upon low cholesterol, thereby regulating the processing of sterol regulatory element-binding proteins (SREBPs) SREBF1/SREBP1 and SREBF2/SREBP2. At high sterol concentrations, formation of a ternary complex with INSIG (INSIG1 or INSIG2) leads to mask the ER export signal in SCAP, promoting retention of the complex in the endoplasmic reticulum. Low sterol concentrations trigger release of INSIG, a conformational change in the SSD domain of SCAP, unmasking of the ER export signal, promoting recruitment into COPII-coated vesicles and transport of the SCAP-SREBP to the Golgi: in the Golgi, SREBPs are then processed, releasing the transcription factor fragment of SREBPs from the membrane, its import into the nucleus and up-regulation of LDLR, INSIG1 and the mevalonate pathway. Binds cholesterol via its SSD domain. In Xenopus laevis (African clawed frog), this protein is Sterol regulatory element-binding protein cleavage-activating protein.